The chain runs to 662 residues: Probable quinol oxidase subunit 1 (662 aa).

A run of 2 helical transmembrane segments spans residues 14-34 (WMIT…IAVI) and 58-78 (IMYL…ALLI). H102 provides a ligand contact to Fe(II)-heme a. A run of 8 helical transmembrane segments spans residues 103–123 (GVIM…NIVV), 140–160 (VSFW…IIGG), 187–207 (IAIQ…FVTI), 228–248 (FITT…LALM), 273–293 (FFWV…FGIY), 311–331 (MVWA…HHFF), 336–356 (GALI…PTGV), and 376–396 (MLFS…GVML). The Cu cation site is built by H279, Y283, H328, and H329. Residues 279–283 (HPEVY) constitute a cross-link (1'-histidyl-3'-tyrosine (His-Tyr)). Residue H414 coordinates heme a3. The next 5 membrane-spanning stretches (helical) occupy residues 415-435 (FHYT…IFWY), 451-471 (CFWF…ILGL), 493-513 (ISTI…VSIV), 587-604 (PVGF…FFLI), and 608-627 (VIPA…YRSF). Residue H416 coordinates Fe(II)-heme a.

The protein belongs to the heme-copper respiratory oxidase family. Cu cation serves as cofactor. Ferriheme a is required as a cofactor. The cofactor is Heme A3..

The protein resides in the cell membrane. The enzyme catalyses 2 a quinol + O2 = 2 a quinone + 2 H2O. It functions in the pathway energy metabolism; oxidative phosphorylation. Its function is as follows. Catalyzes quinol oxidation with the concomitant reduction of oxygen to water. The chain is Probable quinol oxidase subunit 1 (qoxB) from Staphylococcus aureus (strain USA300).